The following is a 220-amino-acid chain: Guanylate kinase (220 aa).

In terms of domain architecture, Guanylate kinase-like spans Gly16 to Arg195. Ser23–Thr30 provides a ligand contact to ATP.

Belongs to the guanylate kinase family.

Its subcellular location is the cytoplasm. The enzyme catalyses GMP + ATP = GDP + ADP. Essential for recycling GMP and indirectly, cGMP. This is Guanylate kinase from Rhodopseudomonas palustris (strain ATCC BAA-98 / CGA009).